We begin with the raw amino-acid sequence, 245 residues long: ATP synthase subunit a, chloroplastic (245 aa).

5 helical membrane-spanning segments follow: residues 34 to 54, 93 to 113, 132 to 152, 197 to 217, and 218 to 238; these read TLMT…LSNL, VPFL…GALL, INTT…AGIS, LVIA…LMLL, and GLFT…AYIG.

The protein belongs to the ATPase A chain family. F-type ATPases have 2 components, CF(1) - the catalytic core - and CF(0) - the membrane proton channel. CF(1) has five subunits: alpha(3), beta(3), gamma(1), delta(1), epsilon(1). CF(0) has four main subunits: a, b, b' and c.

The protein resides in the plastid. Its subcellular location is the chloroplast thylakoid membrane. Functionally, key component of the proton channel; it plays a direct role in the translocation of protons across the membrane. The polypeptide is ATP synthase subunit a, chloroplastic (Bigelowiella natans (Pedinomonas minutissima)).